The primary structure comprises 949 residues: ATPase 6, plasma membrane-type (949 aa).

At 1–64 (MAADISWDEI…EKVENKFLKF (64 aa)) the chain is on the cytoplasmic side. Residues 65–84 (LGFMWNPLSWVMEAAAIMAI) traverse the membrane as a helical segment. The Extracellular portion of the chain corresponds to 85 to 96 (VLANGGGRPPDW). A helical membrane pass occupies residues 97-117 (QDFVGITCLLIINSTISFIEE). The Cytoplasmic segment spans residues 118–246 (NNAGNAAAAL…GHFQKVLTAI (129 aa)). A helical transmembrane segment spans residues 247–267 (GNFCICSIGIGMLIEIIIMYP). At 268–276 (IQHRKYRDG) the chain is on the extracellular side. The helical transmembrane segment at 277–294 (IDNLLVLLIGGIPIAMPT) threads the bilayer. At 295–645 (VLSVTMAIGS…TSRAIFQRMK (351 aa)) the chain is on the cytoplasmic side. The 4-aspartylphosphate intermediate role is filled by Asp332. Mg(2+) is bound by residues Asp590 and Asp594. The chain crosses the membrane as a helical span at residues 646–667 (NYTIYAVSITIRIVLGFMLVAL). Topologically, residues 668-672 (IWEFD) are extracellular. Residues 673–695 (FSPFMVLIIAILNDGTIMTISKD) form a helical membrane-spanning segment. At 696–711 (RVKPSPIPDSWKLKEI) the chain is on the cytoplasmic side. Residues 712 to 732 (FATGVVLGTYMALVTVVFFWL) form a helical membrane-spanning segment. At 733 to 753 (AHDTTFFSDKFGVRSLQGKDE) the chain is on the extracellular side. A helical membrane pass occupies residues 754–774 (ELIAVLYLQVSIISQALIFVT). Over 775 to 786 (RSRSWSFVERPG) the chain is Cytoplasmic. The chain crosses the membrane as a helical span at residues 787–807 (LLLLIAFFVAQLIATLIATYA). The Extracellular segment spans residues 808–815 (HWEFARIK). The chain crosses the membrane as a helical span at residues 816-836 (GCGWGWCGVIWIYSIVTYIPL). Residues 837–949 (DILKFITRYT…IDNLNQHYTV (113 aa)) lie on the Cytoplasmic side of the membrane. Thr883 bears the Phosphothreonine mark. Ser931 carries the phosphoserine modification. The interval 947–949 (YTV) is interaction with 14-3-3 proteins. Thr948 is modified (phosphothreonine).

The protein belongs to the cation transport ATPase (P-type) (TC 3.A.3) family. Type IIIA subfamily. In terms of assembly, binds to 14-3-3 proteins. The binding is induced by phosphorylation of Thr-948. Binding to 14-3-3 proteins activates the H(+)-ATPase. As to expression, expressed in guard cells.

The protein resides in the membrane. It catalyses the reaction ATP + H2O + H(+)(in) = ADP + phosphate + 2 H(+)(out). Its function is as follows. The plasma membrane H(+) ATPase of plants and fungi generates a proton gradient that drives the active transport of nutrients by H(+)-symport. The resulting external acidification and/or internal alkinization may mediate growth responses. The sequence is that of ATPase 6, plasma membrane-type (AHA6) from Arabidopsis thaliana (Mouse-ear cress).